We begin with the raw amino-acid sequence, 336 residues long: Phosphoribosylformylglycinamidine cyclo-ligase (336 aa).

The protein belongs to the AIR synthase family.

The protein localises to the cytoplasm. The enzyme catalyses 2-formamido-N(1)-(5-O-phospho-beta-D-ribosyl)acetamidine + ATP = 5-amino-1-(5-phospho-beta-D-ribosyl)imidazole + ADP + phosphate + H(+). Its pathway is purine metabolism; IMP biosynthesis via de novo pathway; 5-amino-1-(5-phospho-D-ribosyl)imidazole from N(2)-formyl-N(1)-(5-phospho-D-ribosyl)glycinamide: step 2/2. The sequence is that of Phosphoribosylformylglycinamidine cyclo-ligase from Thermoanaerobacter pseudethanolicus (strain ATCC 33223 / 39E) (Clostridium thermohydrosulfuricum).